A 140-amino-acid polypeptide reads, in one-letter code: uncharacterized protein (140 aa).

A run of 2 helical transmembrane segments spans residues 26-43 (YLDLLLVLSIIDVLTGVI) and 64-86 (LLNFFAVILANVIDTVLNLNGVL).

It belongs to the bacteriophage holin family. Cp-1 holin subfamily.

The protein localises to the cell membrane. This is an uncharacterized protein from Bacillus subtilis (strain 168).